The sequence spans 156 residues: Insulin (156 aa).

A signal peptide spans 1-31 (MSKFLLQSHSANACLLTLLLTLASNLDISLA). Disulfide bonds link cysteine 37/cysteine 114, cysteine 49/cysteine 119, cysteine 61/cysteine 128, and cysteine 112/cysteine 115. Positions 79-93 (DTENVNDKLRGILLN) are cleaved as a propeptide — c peptide beta. Residues 96 to 102 (EAFSYLT) constitute a propeptide, c peptide alpha. A propeptide spans 141–156 (TGRSNSGHAQLEDNFS) (d peptide). Positions 144–156 (SNSGHAQLEDNFS) are cleaved as a propeptide — d peptide short form. 4-carboxyglutamate is present on glutamate 152.

It belongs to the insulin family. Heterodimer of a B chain or a B chain' and an A chain probably linked by three disulfide bonds. In terms of tissue distribution, expressed in the central region of the cerebral ganglia mostly within the F and C clusters.

The protein resides in the secreted. Involved in glucose metabolism. In Aplysia californica (California sea hare), this protein is Insulin (PIN).